The following is a 423-amino-acid chain: Putative competence-damage inducible protein (423 aa).

It belongs to the CinA family.

The chain is Putative competence-damage inducible protein from Streptococcus pyogenes serotype M12 (strain MGAS2096).